Here is a 587-residue protein sequence, read N- to C-terminus: Folylpolyglutamate synthase, mitochondrial (587 aa).

The transit peptide at 1–42 directs the protein to the mitochondrion; the sequence is MSRARSHLRAALFLAAASARGITTQVAARRGLSAWPVPQEPS. Position 43 is an N-acetylmethionine (Met-43). Residue 106–109 coordinates ATP; it reads GKGS. The Mg(2+) site is built by Ser-130, Glu-200, and His-228. Residues Arg-363 and Asp-377 each contribute to the ATP site. Ser-539 bears the Phosphoserine mark.

It belongs to the folylpolyglutamate synthase family. Monomer. It depends on K(+) as a cofactor. Requires NH4(+) as cofactor.

It localises to the mitochondrion inner membrane. The protein localises to the mitochondrion matrix. Its subcellular location is the cytoplasm. It carries out the reaction (6S)-5,6,7,8-tetrahydrofolyl-(gamma-L-Glu)(n) + L-glutamate + ATP = (6S)-5,6,7,8-tetrahydrofolyl-(gamma-L-Glu)(n+1) + ADP + phosphate + H(+). It participates in cofactor biosynthesis; tetrahydrofolylpolyglutamate biosynthesis. Its activity is regulated as follows. Activated by 10 mM sodium bicarbonate. Catalyzes conversion of folates to polyglutamate derivatives allowing concentration of folate compounds in the cell and the intracellular retention of these cofactors, which are important substrates for most of the folate-dependent enzymes that are involved in one-carbon transfer reactions involved in purine, pyrimidine and amino acid synthesis. Unsubstituted reduced folates are the preferred substrates. Metabolizes methotrexate (MTX) to polyglutamates. In Homo sapiens (Human), this protein is Folylpolyglutamate synthase, mitochondrial (FPGS).